The chain runs to 448 residues: Hyaluronidase conohyal-Cn1 (448 aa).

Residues 1-18 (MRAVVVVTGLVVVVVATA) form the signal peptide. The propeptide occupies 19 to 33 (LSLPNHDVKSATSSR). Residues 26-55 (VKSATSSRSSSDYQGSSGDDCDEGLPPPDQ) form a disordered region. Over residues 31–43 (SSRSSSDYQGSSG) the composition is skewed to low complexity. The cysteines at positions 67 and 344 are disulfide-linked. Asn141 carries N-linked (GlcNAc...) asparagine glycosylation. Glu151 serves as the catalytic Proton donor. Asn169 and Asn361 each carry an N-linked (GlcNAc...) asparagine glycan. 3 cysteine pairs are disulfide-bonded: Cys369–Cys380, Cys374–Cys413, and Cys415–Cys424. Residues 413-424 (CRCYSAWEGACC) enclose the EGF-like domain.

Belongs to the glycosyl hydrolase 56 family. Expressed by the venom duct.

The protein resides in the secreted. The enzyme catalyses Random hydrolysis of (1-&gt;4)-linkages between N-acetyl-beta-D-glucosamine and D-glucuronate residues in hyaluronate.. Its function is as follows. Hyaluronidase catalyzes the hydrolysis of hyaluronic acid (HA), an anionic, nonsulfated glycosaminoglycan distributed widely throughout connective, epithelial, and neural tissues. In venom, they are known to enhance diffusion of the venom by degrading the extracellular matrix. The chain is Hyaluronidase conohyal-Cn1 from Conus consors (Singed cone).